Consider the following 357-residue polypeptide: Cobalt-precorrin-5B C(1)-methyltransferase (357 aa).

It belongs to the CbiD family.

The catalysed reaction is Co-precorrin-5B + S-adenosyl-L-methionine = Co-precorrin-6A + S-adenosyl-L-homocysteine. It functions in the pathway cofactor biosynthesis; adenosylcobalamin biosynthesis; cob(II)yrinate a,c-diamide from sirohydrochlorin (anaerobic route): step 6/10. Catalyzes the methylation of C-1 in cobalt-precorrin-5B to form cobalt-precorrin-6A. In Rhodospirillum rubrum (strain ATCC 11170 / ATH 1.1.1 / DSM 467 / LMG 4362 / NCIMB 8255 / S1), this protein is Cobalt-precorrin-5B C(1)-methyltransferase.